A 207-amino-acid chain; its full sequence is MLIKYVEFIKSATRAAHYPPGDLPEIAFAGRSNVGKSSLINVLVNRKSLVRTSSTPGRTQLINFFDVNGQFTLVDLPGYGFAKVPLAVKKQWGPMMENYLAKRANLRGVILILDIRRTPVAEDIQMLHWLQAYSIKPILVITKCDKVSKNERGKQSRIIAQTLGVETEELNFFSALNREGKDLIWRRIEEVLPAETAGSAGEAPKAT.

In terms of domain architecture, EngB-type G spans 22–194 (DLPEIAFAGR…WRRIEEVLPA (173 aa)). Residues 30 to 37 (GRSNVGKS), 57 to 61 (GRTQL), 75 to 78 (DLPG), 142 to 145 (TKCD), and 173 to 175 (FSA) contribute to the GTP site. Positions 37 and 59 each coordinate Mg(2+).

Belongs to the TRAFAC class TrmE-Era-EngA-EngB-Septin-like GTPase superfamily. EngB GTPase family. The cofactor is Mg(2+).

Necessary for normal cell division and for the maintenance of normal septation. This Geotalea daltonii (strain DSM 22248 / JCM 15807 / FRC-32) (Geobacter daltonii) protein is Probable GTP-binding protein EngB.